A 427-amino-acid chain; its full sequence is Dihydrofolate synthetase (427 aa).

ATP is bound at residue 34–37; that stretch reads GKGS. 2 residues coordinate Mg(2+): glutamate 123 and histidine 153. Arginine 275 and aspartate 296 together coordinate ATP.

It belongs to the folylpolyglutamate synthase family.

The protein localises to the cytoplasm. The catalysed reaction is 7,8-dihydropteroate + L-glutamate + ATP = 7,8-dihydrofolate + ADP + phosphate + H(+). It participates in cofactor biosynthesis; tetrahydrofolylpolyglutamate biosynthesis. Functionally, glutamate-adding enzyme which catalyzes the binding of the first glutamyl side chain to dihydropteroate. Leads to the de nove synthesis of tetrahydrofolate. The polypeptide is Dihydrofolate synthetase (FOL3) (Saccharomyces cerevisiae (strain ATCC 204508 / S288c) (Baker's yeast)).